Reading from the N-terminus, the 754-residue chain is MTSFFSSTIAGVPRIGAHRELKFALEGFWSGTVSGRELGQTATTLTNDYCDQLAAAGLDSIPTAGRSYYDAMLDTTALLGVFPERFQNLDDHPNDGLPAHIDRYFATARGTAELPASAMTKWFDTNYHYLVPELSADTRFILDDTALLTDIHDQLTRGHDVRPVLIGPLTYLSLSRTTDGSDPLDHLETLFEVFERLLAKLPTPWVQLDEPSLVTDVAPEVLERVRAGYARLATRGGVFVNTYFGAGDQALDTLAGLGLGAIGVDLVSDGVTALEAWKGEELLVAGIVDGRNVWRTDLCAALGTLRRLQARGPVAVSTSCSLLHVPYALTAETGLNPEVREWLAFGEEKVREVVALADALAGEINESLFDAAAAALADRRHSVLTAARDADITDADRSRSPFEVRAAAQDEALDLPPLPTTTIGSFPQTREIRSARARYRAGHLTPEQYEDAMRAEIAQVIRAQEDLGLDVLVHGEPERNDMVQYFAELLDGFLTTTNGWVQSYGSRCVRPPILFGTVTRPEPMTVRWFAHAQSLTNRPVKGMLTGPVTILAWSFVRDDQPLAVTADQIALALREEITDLVDAGAKIIQVDEPAIRELLPLRRAEQDAYTRWAVGAFRLSTSTAPDHVQIHTHMCYSEFNELIRSIIDLDADVTTIEAARSDMQVLAALKSSGFHLGVGPGVWDIHSPRVPELAEVSQLLSSALESVDPRRLWVNPDCGLKTRGWEETTASLKVLVAAAEQARTDLLQRASTSA.

Residues Arg19–Lys22 and Lys121 each bind 5-methyltetrahydropteroyltri-L-glutamate. L-homocysteine contacts are provided by residues Ile423–Ser425 and Glu476. L-methionine is bound by residues Ile423–Ser425 and Glu476. 5-methyltetrahydropteroyltri-L-glutamate is bound by residues Arg507–Cys508 and Trp553. Asp591 is a binding site for L-homocysteine. Asp591 is an L-methionine binding site. Glu597 serves as a coordination point for 5-methyltetrahydropteroyltri-L-glutamate. Zn(2+) is bound by residues His633, Cys635, and Glu657. His686 serves as the catalytic Proton donor. Cys718 serves as a coordination point for Zn(2+).

Belongs to the vitamin-B12 independent methionine synthase family. Requires Zn(2+) as cofactor.

It carries out the reaction 5-methyltetrahydropteroyltri-L-glutamate + L-homocysteine = tetrahydropteroyltri-L-glutamate + L-methionine. The protein operates within amino-acid biosynthesis; L-methionine biosynthesis via de novo pathway; L-methionine from L-homocysteine (MetE route): step 1/1. Functionally, catalyzes the transfer of a methyl group from 5-methyltetrahydrofolate to homocysteine resulting in methionine formation. The sequence is that of 5-methyltetrahydropteroyltriglutamate--homocysteine methyltransferase from Corynebacterium efficiens (strain DSM 44549 / YS-314 / AJ 12310 / JCM 11189 / NBRC 100395).